Reading from the N-terminus, the 236-residue chain is Sperm flagellar protein 1 (236 aa).

Residues 7-112 (EEALHQLYLW…VLIPLRQRLE (106 aa)) form the Calponin-homology (CH) domain. A disordered region spans residues 118–177 (RKQGIGSLQELAPQDGTDYMDVGLSQKARGEGVPDPQGRGQLREGRLPVPRPPGDSQALQ). Residues 183 to 236 (ILQIAEKEQELLASQETVQVLQMKVRRLEHLLQLKNVRIEDLSRRLQQAERKQR) are essential for homodimerization and microtubule bundling activity.

As to quaternary structure, homodimer. Interacts with actin, TJP1, CGN and CDH1.

The protein localises to the cytoplasm. It localises to the cell projection. It is found in the cilium. The protein resides in the flagellum. Its subcellular location is the cytoskeleton. The protein localises to the cilium axoneme. It localises to the apical cell membrane. It is found in the basolateral cell membrane. The protein resides in the stress fiber. Its subcellular location is the microvillus. The protein localises to the lamellipodium. It localises to the filopodium. Microtubule-associated protein involved in the stabilization of microtubules along the axis of migration during radial intercalation. Promotes the establishment and stabilization of an axis of microtubules required for the active migration of cells into the outer epithelium. Microtubule-associated protein that promotes microtubule bundling and stabilizes microtubules against depolymerization in response to cold shock. Essential for ciliary central apparatus formation which requires both its microtubule-binding and bundling activities and for ciliary localization of HYDIN and SPAG6 in ependymal cilia. Binds actin in intestinal epithelial cells (IECs), essential for IECs survival and contributes to formation of filopodia and lamellipodia in migrating IECs. Regulates planar cell polarity signaling pathway and asymmetric microtubule accumulation in ciliated epithelia. This is Sperm flagellar protein 1 (SPEF1) from Bos taurus (Bovine).